We begin with the raw amino-acid sequence, 278 residues long: HTH-type transcriptional regulator HdfR (278 aa).

The HTH lysR-type domain maps to 1–58; that stretch reads MDTELLKTFLEVSRTRHFGRAAEALYLTQSAVSFRIRQLENQLGVNLFTRHRNNIRLT. The H-T-H motif DNA-binding region spans 18–37; that stretch reads FGRAAEALYLTQSAVSFRIR.

It belongs to the LysR transcriptional regulatory family.

Functionally, negatively regulates the transcription of the flagellar master operon flhDC by binding to the upstream region of the operon. In Salmonella dublin (strain CT_02021853), this protein is HTH-type transcriptional regulator HdfR.